The sequence spans 305 residues: Undecaprenyl-diphosphatase (305 aa).

Helical transmembrane passes span 18 to 38 (GVTE…PALV), 55 to 75 (YLAF…VFFW), 103 to 123 (WLIV…EQLF), 130 to 150 (PVPA…GEVL), 187 to 207 (GVLI…RSGI), 225 to 245 (FSFL…IPEL), 246 to 266 (FGPL…ASFV), and 284 to 304 (LTPF…WLAL).

The protein belongs to the UppP family.

It localises to the cell membrane. The enzyme catalyses di-trans,octa-cis-undecaprenyl diphosphate + H2O = di-trans,octa-cis-undecaprenyl phosphate + phosphate + H(+). Its function is as follows. Catalyzes the dephosphorylation of undecaprenyl diphosphate (UPP). Confers resistance to bacitracin. The protein is Undecaprenyl-diphosphatase of Mycobacterium avium (strain 104).